Reading from the N-terminus, the 243-residue chain is Small ribosomal subunit protein uS3 (243 aa).

Ala2 is modified (N-acetylalanine). A Phosphoserine; by PKC/PRKCD modification is found at Ser6. Residues 21-92 (LNEFLTRELA…SVELYAEKVA (72 aa)) form the KH type-2 domain. Ser35 is modified (phosphoserine). Thr42 bears the Phosphothreonine; by MAPK mark. Lys62 is modified (N6-acetyllysine). An asymmetric dimethylarginine; by PRMT1 mark is found at Arg64, Arg65, and Arg67. Residue Thr70 is modified to Phosphothreonine; by PKB. Lys90 participates in a covalent cross-link: Glycyl lysine isopeptide (Lys-Gly) (interchain with G-Cter in ubiquitin). Ser104 bears the Phosphoserine mark. Position 132 is an N6-succinyllysine (Lys132). Residue Lys202 forms a Glycyl lysine isopeptide (Lys-Gly) (interchain with G-Cter in ubiquitin) linkage. Ser209 is modified (phosphoserine; by IKKB). Lys214 participates in a covalent cross-link: Glycyl lysine isopeptide (Lys-Gly) (interchain with G-Cter in SUMO2); alternate. Residue Lys214 forms a Glycyl lysine isopeptide (Lys-Gly) (interchain with G-Cter in ubiquitin); alternate linkage. The interval 214-243 (KDEILPTTPISEQKGGKPEPPAMPQPVPTA) is disordered. Thr220 bears the Phosphothreonine mark. Thr221 is subject to Phosphothreonine; by CDK1 and PKC/PRKCD. Ser224 carries the post-translational modification Phosphoserine. A Glycyl lysine isopeptide (Lys-Gly) (interchain with G-Cter in SUMO2) cross-link involves residue Lys230. Positions 231–243 (PEPPAMPQPVPTA) are enriched in pro residues. A Phosphothreonine modification is found at Thr242.

The protein belongs to the universal ribosomal protein uS3 family. As to quaternary structure, component of the 40S small ribosomal subunit. Identified in a IGF2BP1-dependent mRNP granule complex containing untranslated mRNAs. Interacts with HNRPD. Interacts with PRMT1; the interaction methylates RPS3. Interacts with SUMO1; the interaction sumoylates RPS3. Interacts with UBC9. Interacts with CDK1; the interaction phosphorylates RPS3. Interacts with PRKCD; the interaction phosphorylates RPS3. Interacts with PKB/AKT; the interaction phosphorylates RPS3. Interacts with E2F1; the interaction occurs in the absence of nerve growth factor and increases transcription of pro-apoptotic proteins BCL2L11/BIM and HRK/Dp5. Interacts with the base excision repair proteins APEX1 and OGG1; interaction with OGG1 increases OGG1 N-glycosylase activity. Interacts with UNG; the interaction increases the uracil excision activity of UNG1. Interacts with HSP90; the interaction prevents the ubiquitination and proteasome-dependent degradation of RPS3 and is suppressed by increased ROS levels. Interacts with TOM70; the interaction promotes translocation of RPS3 to the mitochondrion. Interacts (via N-terminus) with RELA (via N-terminus); the interaction enhances the DNA-binding activity of the NF-kappa-B p65-p50 complex. Interacts with NFKBIA; the interaction is direct and may bridge the interaction between RPS3 and RELA. Interacts with IKKB; the interaction phosphorylates RPS3 and enhances its translocation to the nucleus. Interacts (via KH domain) with MDM2 and TP53. Interacts with TRADD. Interacts with CRY1. Post-translationally, methylation by PRMT1 is required for import into the nucleolus and for ribosome assembly. Sumoylation by SUMO1 enhances protein stability through increased resistance to proteolysis. Sumoylation occurs at one or more of the three consensus sites, Lys-18, Lys-214 and Lys-230. In terms of processing, phosphorylation at Thr-221 by CDK1 occurs mainly in G2/M phase. Phosphorylation by PRKCD occurs on a non-ribosomal-associated form which results in translocation of RPS3 to the nucleus and enhances its endonuclease activity. Phosphorylated on Ser-209 by IKKB in response to activation of the NF-kappa-B p65-p50 complex which enhances the association of RPS3 with importin-alpha and mediates the nuclear translocation of RPS3. Phosphorylation by MAPK is required for translocation to the nucleus following exposure of cells to DNA damaging agents such as hydrogen peroxide. Phosphorylation by PKB/AKT mediates RPS3 nuclear translocation, enhances RPS3 endonuclease activity and suppresses RPS3-induced neuronal apoptosis. Post-translationally, ubiquitinated; ubiquitination is prevented by interaction with HSP90 which stabilizes the protein. Monoubiquitinated at Lys-214 by RNF10 and ZNF598 when a ribosome has stalled during translation of poly(A) sequences, leading to preclude synthesis of a long poly-lysine tail and initiate the ribosome quality control (RQC) pathway to degrade the potentially detrimental aberrant nascent polypeptide. Deubiquitinated at Lys-214 by USP10, preventing degradation by the proteasome and promoting 40S ribosome subunit recycling following ribosome dissociation. Ufmylated by UFL1.

It localises to the cytoplasm. The protein resides in the nucleus. Its subcellular location is the nucleolus. It is found in the mitochondrion inner membrane. The protein localises to the cytoskeleton. It localises to the spindle. The enzyme catalyses 2'-deoxyribonucleotide-(2'-deoxyribose 5'-phosphate)-2'-deoxyribonucleotide-DNA = a 3'-end 2'-deoxyribonucleotide-(2,3-dehydro-2,3-deoxyribose 5'-phosphate)-DNA + a 5'-end 5'-phospho-2'-deoxyribonucleoside-DNA + H(+). Functionally, component of the small ribosomal subunit. The ribosome is a large ribonucleoprotein complex responsible for the synthesis of proteins in the cell. Has endonuclease activity and plays a role in repair of damaged DNA. Cleaves phosphodiester bonds of DNAs containing altered bases with broad specificity and cleaves supercoiled DNA more efficiently than relaxed DNA. Displays high binding affinity for 7,8-dihydro-8-oxoguanine (8-oxoG), a common DNA lesion caused by reactive oxygen species (ROS). Has also been shown to bind with similar affinity to intact and damaged DNA. Stimulates the N-glycosylase activity of the base excision protein OGG1. Enhances the uracil excision activity of UNG1. Also stimulates the cleavage of the phosphodiester backbone by APEX1. When located in the mitochondrion, reduces cellular ROS levels and mitochondrial DNA damage. Has also been shown to negatively regulate DNA repair in cells exposed to hydrogen peroxide. Plays a role in regulating transcription as part of the NF-kappa-B p65-p50 complex where it binds to the RELA/p65 subunit, enhances binding of the complex to DNA and promotes transcription of target genes. Represses its own translation by binding to its cognate mRNA. Binds to and protects TP53/p53 from MDM2-mediated ubiquitination. Involved in spindle formation and chromosome movement during mitosis by regulating microtubule polymerization. Involved in induction of apoptosis through its role in activation of CASP8. Induces neuronal apoptosis by interacting with the E2F1 transcription factor and acting synergistically with it to up-regulate pro-apoptotic proteins BCL2L11/BIM and HRK/Dp5. Interacts with TRADD following exposure to UV radiation and induces apoptosis by caspase-dependent JNK activation. The sequence is that of Small ribosomal subunit protein uS3 (RPS3) from Bos taurus (Bovine).